Reading from the N-terminus, the 536-residue chain is uncharacterized protein (536 aa).

The Radical SAM core domain maps to 163-394 (LDAYDSMSVQ…MNFIPTRPLE (232 aa)). 3 residues coordinate [4Fe-4S] cluster: C177, C181, and C184.

It depends on [4Fe-4S] cluster as a cofactor.

This is an uncharacterized protein from Synechocystis sp. (strain ATCC 27184 / PCC 6803 / Kazusa).